A 232-amino-acid chain; its full sequence is LexA repressor (232 aa).

The H-T-H motif DNA-binding region spans 26 to 46; the sequence is FDEMKDALDLRSKSGIHRLIT. Residues S153 and K191 each act as for autocatalytic cleavage activity in the active site.

This sequence belongs to the peptidase S24 family. Homodimer.

The catalysed reaction is Hydrolysis of Ala-|-Gly bond in repressor LexA.. In terms of biological role, represses a number of genes involved in the response to DNA damage (SOS response), including recA and lexA. In the presence of single-stranded DNA, RecA interacts with LexA causing an autocatalytic cleavage which disrupts the DNA-binding part of LexA, leading to derepression of the SOS regulon and eventually DNA repair. The protein is LexA repressor of Afipia carboxidovorans (strain ATCC 49405 / DSM 1227 / KCTC 32145 / OM5) (Oligotropha carboxidovorans).